The primary structure comprises 244 residues: UPF0246 protein FMG_1068 (244 aa).

Belongs to the UPF0246 family.

This Finegoldia magna (strain ATCC 29328 / DSM 20472 / WAL 2508) (Peptostreptococcus magnus) protein is UPF0246 protein FMG_1068.